Here is a 653-residue protein sequence, read N- to C-terminus: DNA mismatch repair protein MutL (653 aa).

The tract at residues 368–413 (EVSQVAEPEGKTDITNKKETETKEKAEKKENKQEEKEEKTSAPEYV) is disordered. Residues 375-408 (PEGKTDITNKKETETKEKAEKKENKQEEKEEKTS) show a composition bias toward basic and acidic residues.

It belongs to the DNA mismatch repair MutL/HexB family.

In terms of biological role, this protein is involved in the repair of mismatches in DNA. It is required for dam-dependent methyl-directed DNA mismatch repair. May act as a 'molecular matchmaker', a protein that promotes the formation of a stable complex between two or more DNA-binding proteins in an ATP-dependent manner without itself being part of a final effector complex. This Lactobacillus delbrueckii subsp. bulgaricus (strain ATCC 11842 / DSM 20081 / BCRC 10696 / JCM 1002 / NBRC 13953 / NCIMB 11778 / NCTC 12712 / WDCM 00102 / Lb 14) protein is DNA mismatch repair protein MutL.